Consider the following 388-residue polypeptide: FBD-associated F-box protein At5g60610 (388 aa).

Positions 1–47 (MDRISGLPDELLVKIISFVPTKVAVSTSILSKRWESLWKWVPKLECD) constitute an F-box domain. The FBD domain occupies 337 to 388 (NWKNIQRSVPKCLKSSLKTLEFAGYTARPEERDFLSFIFKKARCLKTSSISH).

The chain is FBD-associated F-box protein At5g60610 from Arabidopsis thaliana (Mouse-ear cress).